A 334-amino-acid chain; its full sequence is MKKNQFLKESDVTAESVFFMKRRQVLKALGISAAAFSLPHAAHADLLSWFKGNDRPPAPAGKPLEFSKPAAWQNNLPLTPADKVSGYNNFYEFGLDKADPAANAGSLKTDPWTLKISGEVAKPLTLDHDDLTRRFPLEERIYRMRCVEAWSMVVPWIGFPLHKLLALAEPTSNAKYVAFETIYAPEQMPGQQDRFIGGGLKYPYVEGLRLDEAMHPLTLMTVGVYGKALPPQNGAPVRLIVPWKYGFKGIKSIVSIKLTRERPPTTWNLAAPDEYGFYANVNPHVDHPRWSQATERFIGSGGILDVQRQPTLLFNGYADQVASLYRGLDLRENF.

Positions 1–44 form a signal peptide, tat-type signal; that stretch reads MKKNQFLKESDVTAESVFFMKRRQVLKALGISAAAFSLPHAAHA. Residues N88, 91–92, C146, T181, N233, R238, and 249–251 contribute to the Mo-molybdopterin site; these read YE and GIK.

Belongs to the MsrP family. As to quaternary structure, heterodimer of a catalytic subunit (MsrP) and a heme-binding subunit (MsrQ). Mo-molybdopterin is required as a cofactor. In terms of processing, predicted to be exported by the Tat system. The position of the signal peptide cleavage has not been experimentally proven.

The protein resides in the periplasm. It carries out the reaction L-methionyl-[protein] + a quinone + H2O = L-methionyl-(S)-S-oxide-[protein] + a quinol. The catalysed reaction is L-methionyl-[protein] + a quinone + H2O = L-methionyl-(R)-S-oxide-[protein] + a quinol. Part of the MsrPQ system that repairs oxidized periplasmic proteins containing methionine sulfoxide residues (Met-O), using respiratory chain electrons. Thus protects these proteins from oxidative-stress damage caused by reactive species of oxygen and chlorine generated by the host defense mechanisms. MsrPQ is essential for the maintenance of envelope integrity under bleach stress, rescuing a wide series of structurally unrelated periplasmic proteins from methionine oxidation, including the primary periplasmic chaperone SurA and the lipoprotein Pal. The catalytic subunit MsrP is non-stereospecific, being able to reduce both (R-) and (S-) diastereoisomers of methionine sulfoxide. This is Protein-methionine-sulfoxide reductase catalytic subunit MsrP from Escherichia coli O7:K1 (strain IAI39 / ExPEC).